The primary structure comprises 470 residues: MVRVRFAPSPTGYLHVGGARTALFNYLFAKHHGGKFILRIEDTDIARSEGIFEENLMKTLQWLGLNWDEGPDIGGSFGPYRQSERLNIYEEYAKKLIALDKAYEVFAYPEEIEEIREKLLSKGLTPHYDRTIFEPFATKERKREYEEKGLKPAIYFSMPRKAFIHNDLVKGTVQFSEGSVGDFAILRSNGIPTYNFACVVDDMLMQITHVIRGDDHLPNTVKQLALYEAFSARPPEIGHVSTILGPDGKKLSKRHGATSIEELRERGYLPQAVVNYLALLGWSSPDAKEIMSMQEMIERFSIDRLSKNPAIFDPAKLSWMNGQYIRSTNEEELEQLLKPLLEKWNFIPRNQDWLRRVIIAVKDRLHTLEDFQHVADFFFVKPEIKTETEYQIKCAMLECADKLESLDRSDKNSIVEVFRSTIKKQKVSAKEFYSTLRYVLTGKHEGPELVDIVFLLGPNEVAARIKSILG.

Residues 8–18 (PSPTGYLHVGG) carry the 'HIGH' region motif. The 'KMSKS' region signature appears at 250 to 254 (KLSKR). K253 contributes to the ATP binding site.

This sequence belongs to the class-I aminoacyl-tRNA synthetase family. Glutamate--tRNA ligase type 1 subfamily. As to quaternary structure, monomer.

It localises to the cytoplasm. It catalyses the reaction tRNA(Glu) + L-glutamate + ATP = L-glutamyl-tRNA(Glu) + AMP + diphosphate. Catalyzes the attachment of glutamate to tRNA(Glu) in a two-step reaction: glutamate is first activated by ATP to form Glu-AMP and then transferred to the acceptor end of tRNA(Glu). This is Glutamate--tRNA ligase 1 from Pseudothermotoga lettingae (strain ATCC BAA-301 / DSM 14385 / NBRC 107922 / TMO) (Thermotoga lettingae).